Consider the following 83-residue polypeptide: Cytochrome b559 subunit alpha (83 aa).

The chain crosses the membrane as a helical span at residues 22–36; the sequence is VIHAVTLPAIFLAGF. His-24 is a binding site for heme.

It belongs to the PsbE/PsbF family. As to quaternary structure, heterodimer of an alpha subunit and a beta subunit. PSII is composed of 1 copy each of membrane proteins PsbA, PsbB, PsbC, PsbD, PsbE, PsbF, PsbH, PsbI, PsbJ, PsbK, PsbL, PsbM, PsbT, PsbX, PsbY, PsbZ, Psb30/Ycf12, peripheral proteins PsbO, CyanoQ (PsbQ), PsbU, PsbV and a large number of cofactors. It forms dimeric complexes. Heme b serves as cofactor.

Its subcellular location is the cellular thylakoid membrane. Its function is as follows. This b-type cytochrome is tightly associated with the reaction center of photosystem II (PSII). PSII is a light-driven water:plastoquinone oxidoreductase that uses light energy to abstract electrons from H(2)O, generating O(2) and a proton gradient subsequently used for ATP formation. It consists of a core antenna complex that captures photons, and an electron transfer chain that converts photonic excitation into a charge separation. In Synechococcus sp. (strain RCC307), this protein is Cytochrome b559 subunit alpha.